Consider the following 327-residue polypeptide: Phenylalanine--tRNA ligase alpha subunit (327 aa).

Glutamate 252 provides a ligand contact to Mg(2+).

Belongs to the class-II aminoacyl-tRNA synthetase family. Phe-tRNA synthetase alpha subunit type 1 subfamily. As to quaternary structure, tetramer of two alpha and two beta subunits. It depends on Mg(2+) as a cofactor.

The protein localises to the cytoplasm. It catalyses the reaction tRNA(Phe) + L-phenylalanine + ATP = L-phenylalanyl-tRNA(Phe) + AMP + diphosphate + H(+). This is Phenylalanine--tRNA ligase alpha subunit from Salmonella choleraesuis (strain SC-B67).